A 209-amino-acid polypeptide reads, in one-letter code: Large ribosomal subunit protein uL1 (209 aa).

This sequence belongs to the universal ribosomal protein uL1 family. In terms of assembly, part of the 50S ribosomal subunit.

Binds directly to 23S rRNA. The L1 stalk is quite mobile in the ribosome, and is involved in E site tRNA release. Its function is as follows. Protein L1 is also a translational repressor protein, it controls the translation of the L11 operon by binding to its mRNA. This Neorickettsia sennetsu (strain ATCC VR-367 / Miyayama) (Ehrlichia sennetsu) protein is Large ribosomal subunit protein uL1 (rplA).